Consider the following 217-residue polypeptide: tRNA (guanine-N(7)-)-methyltransferase (217 aa).

Residues Glu-44, Asp-69, Asp-96, and Asp-118 each coordinate S-adenosyl-L-methionine. The active site involves Asp-118. Substrate is bound at residue Lys-122. Residues 124 to 129 (RHEKRR) form an interaction with RNA region. Substrate-binding positions include Asp-154 and 193 to 196 (TEYE).

It belongs to the class I-like SAM-binding methyltransferase superfamily. TrmB family.

It carries out the reaction guanosine(46) in tRNA + S-adenosyl-L-methionine = N(7)-methylguanosine(46) in tRNA + S-adenosyl-L-homocysteine. It functions in the pathway tRNA modification; N(7)-methylguanine-tRNA biosynthesis. Its function is as follows. Catalyzes the formation of N(7)-methylguanine at position 46 (m7G46) in tRNA. The polypeptide is tRNA (guanine-N(7)-)-methyltransferase (Lactococcus lactis subsp. cremoris (strain SK11)).